A 120-amino-acid polypeptide reads, in one-letter code: Transcription elongation factor 1 homolog (120 aa).

Residues Cys25, Cys28, Cys49, and Cys52 each contribute to the Zn(2+) site. Residues 84–110 (EDDVVQEEEEEVEEEEEEEEEEDDEDD) show a composition bias toward acidic residues. Residues 84–120 (EDDVVQEEEEEVEEEEEEEEEEDDEDDHVSVKRKYNF) form a disordered region.

It belongs to the ELOF1 family.

Its subcellular location is the nucleus. Its function is as follows. Transcription elongation factor implicated in the maintenance of proper chromatin structure in actively transcribed regions. The polypeptide is Transcription elongation factor 1 homolog (Arabidopsis thaliana (Mouse-ear cress)).